Consider the following 188-residue polypeptide: GMP synthase [glutamine-hydrolyzing] subunit A (188 aa).

The Glutamine amidotransferase type-1 domain occupies 1–188 (MIVILNNGGQ…FCKVCGLLGE (188 aa)). Residue cysteine 76 is the Nucleophile of the active site. Residues histidine 163 and glutamate 165 contribute to the active site.

Heterodimer composed of a glutamine amidotransferase subunit (A) and a GMP-binding subunit (B).

The enzyme catalyses XMP + L-glutamine + ATP + H2O = GMP + L-glutamate + AMP + diphosphate + 2 H(+). Its pathway is purine metabolism; GMP biosynthesis; GMP from XMP (L-Gln route): step 1/1. In terms of biological role, catalyzes the synthesis of GMP from XMP. This chain is GMP synthase [glutamine-hydrolyzing] subunit A, found in Methanococcus aeolicus (strain ATCC BAA-1280 / DSM 17508 / OCM 812 / Nankai-3).